We begin with the raw amino-acid sequence, 67 residues long: SPbeta prophage-derived uncharacterized protein YoqF (67 aa).

This chain is SPbeta prophage-derived uncharacterized protein YoqF (yoqF), found in Bacillus subtilis (strain 168).